Here is a 437-residue protein sequence, read N- to C-terminus: Amino-acid acetyltransferase (437 aa).

The region spanning 289–429 is the N-acetyltransferase domain; the sequence is ENIRLATSFD…EHYNYQRMSK (141 aa).

This sequence belongs to the acetyltransferase family. ArgA subfamily.

Its subcellular location is the cytoplasm. The enzyme catalyses L-glutamate + acetyl-CoA = N-acetyl-L-glutamate + CoA + H(+). Its pathway is amino-acid biosynthesis; L-arginine biosynthesis; N(2)-acetyl-L-ornithine from L-glutamate: step 1/4. The polypeptide is Amino-acid acetyltransferase (Actinobacillus pleuropneumoniae serotype 5b (strain L20)).